The sequence spans 32 residues: Alpha-amylase inhibitor AAI (32 aa).

3 disulfides stabilise this stretch: cysteine 1/cysteine 18, cysteine 8/cysteine 23, and cysteine 17/cysteine 31.

In terms of tissue distribution, endosperm.

In terms of biological role, alpha-amylase inhibitor. It is active against alpha-amylases from Tribolium castaneum and Prostephanus truncatus larvae. The chain is Alpha-amylase inhibitor AAI (AAI) from Amaranthus hypochondriacus (Prince-of-Wales feather).